We begin with the raw amino-acid sequence, 97 residues long: NADH dehydrogenase [ubiquinone] 1 alpha subcomplex subunit 2 (97 aa).

A disulfide bridge connects residues Cys-19 and Cys-53.

Belongs to the complex I NDUFA2 subunit family. As to quaternary structure, complex I is composed of at least 49 different subunits.

Its subcellular location is the mitochondrion inner membrane. Its function is as follows. Accessory subunit of the mitochondrial membrane respiratory chain NADH dehydrogenase (Complex I), that is believed not to be involved in catalysis. Complex I functions in the transfer of electrons from NADH to the respiratory chain. The immediate electron acceptor for the enzyme is believed to be ubiquinone. The protein is NADH dehydrogenase [ubiquinone] 1 alpha subcomplex subunit 2 of Arabidopsis thaliana (Mouse-ear cress).